The sequence spans 444 residues: Type VII secretion system protein EssB (444 aa).

Topologically, residues 1-229 (MVKNHNPKNE…RKVGHTVFKW (229 aa)) are cytoplasmic. Residues 230 to 250 (VAIGMTTLSVLLIAFLAFLYF) traverse the membrane as a helical segment. The Extracellular segment spans residues 251–444 (SVMKHNERIE…EKRQEAERKK (194 aa)). Residues 366–444 (KNNGDLSNDK…EKRQEAERKK (79 aa)) form a disordered region. The span at 372 to 444 (SNDKRSEETK…EKRQEAERKK (73 aa)) shows a compositional bias: basic and acidic residues. Positions 387 to 443 (LQDILDKEKQVKDEKAKSEEEKAKAKDEKLKQQEENEKKQKEQAQKDKEKRQEAERK) form a coiled coil.

Belongs to the EssB family. As to quaternary structure, may oligomerize and interact with other membrane components to form the Ess system. Interacts with EsaA.

It localises to the cell membrane. Functionally, component of the type VII secretion system (Ess). Required for the secretion of EsxA and proper accumulation of EssB and EssD. This Staphylococcus aureus (strain USA300) protein is Type VII secretion system protein EssB.